The chain runs to 298 residues: MQTQRLRIAIQKKGRLSKESQALLKQCGVKFNVMGERLVVHSENMPIDLLLVRDDDIPGLIMDGVVDLGFIGENELEEVRLDRKALGEPCEFVQLRRLDFGGCRLSIAIDKDEEYNGPQDLAGKRIATTYPQLLKAYMDEAGVPFSTCMLTGSVEVAPRAGLADAIADLVSTGATLEANGLKEAEVIFRSKATLIQRIGEFDADKAELINKLLTRMQGVQQAKESKYIMLHAPAGKLEQIKALLPGAEDPTVLPLSADKQKVAVHLVSTENLFWETMEQLKELGASSILVLPIEKMME.

It belongs to the ATP phosphoribosyltransferase family. Long subfamily. Requires Mg(2+) as cofactor.

It is found in the cytoplasm. It catalyses the reaction 1-(5-phospho-beta-D-ribosyl)-ATP + diphosphate = 5-phospho-alpha-D-ribose 1-diphosphate + ATP. It functions in the pathway amino-acid biosynthesis; L-histidine biosynthesis; L-histidine from 5-phospho-alpha-D-ribose 1-diphosphate: step 1/9. Feedback inhibited by histidine. In terms of biological role, catalyzes the condensation of ATP and 5-phosphoribose 1-diphosphate to form N'-(5'-phosphoribosyl)-ATP (PR-ATP). Has a crucial role in the pathway because the rate of histidine biosynthesis seems to be controlled primarily by regulation of HisG enzymatic activity. This is ATP phosphoribosyltransferase from Vibrio parahaemolyticus serotype O3:K6 (strain RIMD 2210633).